The chain runs to 98 residues: Small ribosomal subunit protein bS18 (98 aa).

Belongs to the bacterial ribosomal protein bS18 family. In terms of assembly, part of the 30S ribosomal subunit. Forms a tight heterodimer with protein bS6.

In terms of biological role, binds as a heterodimer with protein bS6 to the central domain of the 16S rRNA, where it helps stabilize the platform of the 30S subunit. This is Small ribosomal subunit protein bS18 from Flavobacterium johnsoniae (strain ATCC 17061 / DSM 2064 / JCM 8514 / BCRC 14874 / CCUG 350202 / NBRC 14942 / NCIMB 11054 / UW101) (Cytophaga johnsonae).